A 544-amino-acid chain; its full sequence is Intercellular adhesion molecule 3 (544 aa).

Positions 1 to 31 (MIASGPPPRVYWTSLIFLLLACCLLPTGAQG) are cleaved as a signal peptide. At 32-486 (QTYQVRVEPK…MMDVQGRNPV (455 aa)) the chain is on the extracellular side. One can recognise an Ig-like C2-type 1 domain in the interval 48 to 105 (GEPLVVNCTLDCPGPGLISLETALSKEPHSRGLGWAAFRLTNVTGDMEILCSGICNKS). 12 N-linked (GlcNAc...) asparagine glycosylation sites follow: asparagine 54, asparagine 89, asparagine 103, asparagine 112, asparagine 138, asparagine 190, asparagine 209, asparagine 243, asparagine 267, asparagine 296, asparagine 321, and asparagine 326. Disulfide bonds link cysteine 55–cysteine 98 and cysteine 59–cysteine 102. Positions 134–200 (GEELNLSCLV…FSCRSELDLR (67 aa)) constitute an Ig-like C2-type 2 domain. A disulfide bridge connects residues cysteine 141 and cysteine 193. Positions 237-302 (ETSWPVNCSL…IVCNVTLGVE (66 aa)) constitute an Ig-like C2-type 3 domain. Cysteine 244 and cysteine 295 are oxidised to a cystine. One can recognise an Ig-like C2-type 4 domain in the interval 330 to 383 (GTPVTVTCAAGPQVQVMLDGVPAAVPGQPAQLQLKATEMDDRRTFFCNATLKVH). Cysteine 337 and cysteine 376 are disulfide-bonded. Asparagine 377, asparagine 390, and asparagine 456 each carry an N-linked (GlcNAc...) asparagine glycan. One can recognise an Ig-like C2-type 5 domain in the interval 417–470 (KTMHILQCQARGNPNPQLQCLREGSKFKVPVGIPFLVLLNYSGTYSCQAASSRG). Cysteine 424 and cysteine 463 are disulfide-bonded. Residues 487–511 (TINIVLGVLAILGLVTLAAASVYVF) form a helical membrane-spanning segment. The Cytoplasmic segment spans residues 512-544 (WVQRQHDIYHLTPRSTRWRLTSTQPVTVAEELS).

This sequence belongs to the immunoglobulin superfamily. ICAM family. In terms of assembly, interacts with moesin/MSN. As to expression, leukocytes.

It is found in the membrane. Functionally, ICAM proteins are ligands for the leukocyte adhesion protein LFA-1 (integrin alpha-L/beta-2). ICAM3 is also a ligand for integrin alpha-D/beta-2. In association with integrin alpha-L/beta-2, contributes to apoptotic neutrophil phagocytosis by macrophages. This chain is Intercellular adhesion molecule 3 (ICAM3), found in Bos taurus (Bovine).